We begin with the raw amino-acid sequence, 238 residues long: Ribose-5-phosphate isomerase A (238 aa).

Substrate-binding positions include 30–33, 87–90, and 100–103; these read SGST, DGAD, and KGGG. Glu-109 acts as the Proton acceptor in catalysis. Lys-127 lines the substrate pocket.

The protein belongs to the ribose 5-phosphate isomerase family. In terms of assembly, homodimer.

The enzyme catalyses aldehydo-D-ribose 5-phosphate = D-ribulose 5-phosphate. Its pathway is carbohydrate degradation; pentose phosphate pathway; D-ribose 5-phosphate from D-ribulose 5-phosphate (non-oxidative stage): step 1/1. In terms of biological role, catalyzes the reversible conversion of ribose-5-phosphate to ribulose 5-phosphate. The chain is Ribose-5-phosphate isomerase A from Synechococcus sp. (strain WH7803).